The sequence spans 410 residues: Neuroserpin (410 aa).

A signal peptide spans 1 to 16 (MAYLGLLSLVALQSLV). A Phosphoserine modification is found at S83. Residues N157, N321, and N401 are each glycosylated (N-linked (GlcNAc...) asparagine). S403 carries O-linked (Xyl...) (chondroitin sulfate) serine glycosylation.

It belongs to the serpin family. In terms of tissue distribution, detected in adult pituitary and adrenal gland.

Its subcellular location is the secreted. The protein localises to the cytoplasmic vesicle. It localises to the secretory vesicle lumen. It is found in the perikaryon. Serine protease inhibitor that inhibits plasminogen activators and plasmin but not thrombin. May be involved in the formation or reorganization of synaptic connections as well as for synaptic plasticity in the adult nervous system. May protect neurons from cell damage by tissue-type plasminogen activator. The protein is Neuroserpin (Serpini1) of Rattus norvegicus (Rat).